We begin with the raw amino-acid sequence, 778 residues long: Acyl-homoserine lactone acylase PvdQ (778 aa).

The signal sequence occupies residues 1–25 (MTISRQFTGLTLAGLFLGLSLSAQA). A propeptide spans 196 to 218 (IENNARAYQLADTRLQRFALDRG) (spacer peptide). The Nucleophile role is filled by Ser-219.

This sequence belongs to the peptidase S45 family. As to quaternary structure, heterodimer of an alpha subunit and a beta subunit processed from the same precursor.

It localises to the periplasm. The catalysed reaction is an N-acyl-L-homoserine lactone + H2O = L-homoserine lactone + a carboxylate. In terms of biological role, catalyzes the deacylation of acyl-homoserine lactone (AHL or acyl-HSL), releasing homoserine lactone (HSL) and the corresponding fatty acid. Possesses a specificity for the degradation of long-chain acyl-HSLs (side chains of 11 to 14 carbons in length). The chain is Acyl-homoserine lactone acylase PvdQ (pvdQ) from Pseudomonas fluorescens (strain Pf0-1).